A 552-amino-acid polypeptide reads, in one-letter code: FACT complex subunit POB3 (552 aa).

The span at 190–205 shows a compositional bias: basic and acidic residues; the sequence is KKEESSNEVVPKKEDG. 2 disordered regions span residues 190 to 209 and 484 to 552; these read KKEE…AEGE and QTAL…PKVE. Residues 490–529 show a composition bias toward acidic residues; the sequence is DSDEEDINMGSAGEDDESVDEDFQVSSDNDADEVAEEFDS. The segment covering 541-552 has biased composition (basic and acidic residues); the sequence is DEERPSKKPKVE.

This sequence belongs to the SSRP1 family. As to quaternary structure, forms a stable heterodimer with SPT16. The SPT16-POB3 dimer weakly associates with multiple molecules of NHP6 (NHP6A or NHP6B) to form the FACT (yFACT or SNP) complex. The FACT complex interacts with the CK2 (casein kinase II) complex subunits CKA1, CKA2, CKB1 and CKB2 and the components of the transcription machinery CHD1, CTR9, PAF1 and CDC73. The FACT complex interacts with the PAF1 complex. SPT16 interacts with SAS3 and POL1. Interacts directly with RFA1.

It localises to the nucleus. Its subcellular location is the chromosome. Functionally, component of the FACT complex, a general chromatin factor that acts to reorganize nucleosomes. The FACT complex is involved in multiple processes that require DNA as a template such as mRNA elongation, DNA replication and DNA repair. During transcription elongation the FACT complex acts as a histone chaperone that both destabilizes and restores nucleosomal structure. It facilitates the passage of RNA polymerase II and transcription by promoting the dissociation of one histone H2A-H2B dimer from the nucleosome, then subsequently promotes the reestablishment of the nucleosome following the passage of RNA polymerase II. Transcription elongation is promoted by the repression of transcription initiation from cryptic sites. Also acts in establishing transcription initiation complexes and promotes SPT15/TBP-binding to a TATA box. Together with replication factor-A protein (RPA), FACT may play a role in nucleosome deposition during DNA replication. The polypeptide is FACT complex subunit POB3 (POB3) (Saccharomyces cerevisiae (strain ATCC 204508 / S288c) (Baker's yeast)).